We begin with the raw amino-acid sequence, 671 residues long: Protein KHNYN (671 aa).

Disordered stretches follow at residues 234 to 274 (RVAG…LSGE), 294 to 327 (EVAP…AHVP), 344 to 402 (HNGS…GGNL), and 577 to 626 (GPTL…RKTR). Positions 250–272 (TVEKEERKQDAVRDMGSGRKELS) are enriched in basic and acidic residues. Positions 351 to 365 (PRVPSPPPAPEPPWP) are enriched in pro residues. Ser355 carries the phosphoserine modification. A compositionally biased stretch (basic and acidic residues) spans 367 to 381 (GDRDRDRDRGDRGDK). The 153-residue stretch at 430-582 (LRHIVIDGSN…LGRNGPTLDE (153 aa)) folds into the RNase NYN domain. Polar residues predominate over residues 591–612 (QGSSKTQQPSKGSTEQANQQQG).

Belongs to the N4BP1 family.

In Mus musculus (Mouse), this protein is Protein KHNYN (Khnyn).